Consider the following 132-residue polypeptide: Histone H2A.1 (132 aa).

The protein belongs to the histone H2A family. In terms of assembly, the nucleosome is a histone octamer containing two molecules each of H2A, H2B, H3 and H4 assembled in one H3-H4 heterotetramer and two H2A-H2B heterodimers. The octamer wraps approximately 147 bp of DNA.

Its subcellular location is the nucleus. It is found in the chromosome. Core component of nucleosome. Nucleosomes wrap and compact DNA into chromatin, limiting DNA accessibility to the cellular machineries which require DNA as a template. Histones thereby play a central role in transcription regulation, DNA repair, DNA replication and chromosomal stability. DNA accessibility is regulated via a complex set of post-translational modifications of histones, also called histone code, and nucleosome remodeling. The protein is Histone H2A.1 of Leishmania infantum.